The chain runs to 164 residues: R-phycoerythrin alpha chain (164 aa).

The (2R,3E)-phycoerythrobilin site is built by C82 and C139.

It belongs to the phycobiliprotein family. As to quaternary structure, heterodimer of an alpha and a beta chain. Contains two covalently linked bilin chromophores.

It is found in the plastid. Its subcellular location is the chloroplast thylakoid membrane. Light-harvesting photosynthetic bile pigment-protein from the phycobiliprotein complex. The chain is R-phycoerythrin alpha chain (cpeA) from Porphyra purpurea (Red seaweed).